A 222-amino-acid chain; its full sequence is Arginine ABC transporter permease protein ArtM (222 aa).

Residues 1–15 lie on the Periplasmic side of the membrane; it reads MFEYLPELMKGLHTS. The ABC transmembrane type-1 domain occupies 12 to 208; sequence LHTSLTLTVA…VVNGLLTLMM (197 aa). The chain crosses the membrane as a helical span at residues 16–36; sequence LTLTVASLIVALILALIFTII. At 37–49 the chain is on the cytoplasmic side; it reads LTLKTPVLVWLVR. A helical transmembrane segment spans residues 50 to 70; sequence GYITLFTGTPLLVQIFLIYYG. The Periplasmic portion of the chain corresponds to 71-79; sequence PGQFPTLQE. Residues 80-100 traverse the membrane as a helical segment; it reads YPALWHLLSEPWLCALIALSL. Over 101 to 154 the chain is Cytoplasmic; it reads NSAAYTTQLFYGAIRAIPEGQWQSCSALGMSKKDTLAILLPYAFKRSLSSYSNE. The helical transmembrane segment at 155–175 threads the bilayer; that stretch reads VVLVFKSTSLAYTITLMEVMG. Topologically, residues 176-186 are periplasmic; sequence YSQLLYGRTYD. A helical transmembrane segment spans residues 187-207; sequence VMVFGAAGIIYLVVNGLLTLM. The Cytoplasmic portion of the chain corresponds to 208-222; the sequence is MRLIERKALAFERRN.

The protein belongs to the binding-protein-dependent transport system permease family. HisMQ subfamily. In terms of assembly, the complex is composed of two ATP-binding proteins (ArtP), two transmembrane proteins (ArtM and ArtQ) and two solute-binding proteins (ArtJ and ArtI).

It localises to the cell inner membrane. Functionally, part of the ABC transporter complex ArtPIQMJ involved in arginine transport. Probably responsible for the translocation of the substrate across the membrane. The chain is Arginine ABC transporter permease protein ArtM (artM) from Escherichia coli (strain K12).